A 270-amino-acid polypeptide reads, in one-letter code: 5'-AMP-activated protein kinase subunit beta-1 (270 aa).

The tract at residues 1–44 is disordered; the sequence is MGNTSSERAALDRQGGHKTPRRDSSGGSKDGDRPKILMDSPEDA. A lipid anchor (N-myristoyl glycine) is attached at Gly-2. Thr-4 bears the Phosphothreonine mark. 2 positions are modified to phosphoserine: Ser-5 and Ser-6. Over residues 9–36 the composition is skewed to basic and acidic residues; the sequence is AALDRQGGHKTPRRDSSGGSKDGDRPKI. Thr-19 is modified (phosphothreonine). A phosphoserine; by autocatalysis mark is found at Ser-24 and Ser-25. 3 positions are modified to phosphoserine: Ser-40, Ser-96, and Ser-101. Residues 68–163 are glycogen-binding domain; sequence EVNDKAPAQA…QVKKTDFEVF (96 aa). Ser-108 is modified (phosphoserine; by autocatalysis). Residue Thr-148 is modified to Phosphothreonine. Phosphoserine is present on Ser-182. Residue Lys-201 is modified to N6-succinyllysine.

The protein belongs to the 5'-AMP-activated protein kinase beta subunit family. As to quaternary structure, AMPK is a heterotrimer of an alpha catalytic subunit (PRKAA1 or PRKAA2), a beta (PRKAB1 or PRKAB2) and a gamma non-catalytic subunits (PRKAG1, PRKAG2 or PRKAG3). Interacts with FNIP1 and FNIP2. Post-translationally, phosphorylated when associated with the catalytic subunit (PRKAA1 or PRKAA2). Phosphorylated by ULK1; leading to negatively regulate AMPK activity and suggesting the existence of a regulatory feedback loop between ULK1 and AMPK.

Non-catalytic subunit of AMP-activated protein kinase (AMPK), an energy sensor protein kinase that plays a key role in regulating cellular energy metabolism. In response to reduction of intracellular ATP levels, AMPK activates energy-producing pathways and inhibits energy-consuming processes: inhibits protein, carbohydrate and lipid biosynthesis, as well as cell growth and proliferation. AMPK acts via direct phosphorylation of metabolic enzymes, and by longer-term effects via phosphorylation of transcription regulators. Also acts as a regulator of cellular polarity by remodeling the actin cytoskeleton; probably by indirectly activating myosin. Beta non-catalytic subunit acts as a scaffold on which the AMPK complex assembles, via its C-terminus that bridges alpha (PRKAA1 or PRKAA2) and gamma subunits (PRKAG1, PRKAG2 or PRKAG3). The polypeptide is 5'-AMP-activated protein kinase subunit beta-1 (PRKAB1) (Bos taurus (Bovine)).